Here is a 104-residue protein sequence, read N- to C-terminus: Alpha-amylase inhibitor HOE-467A (104 aa).

A signal peptide spans 1-30; it reads MRVRALRLAALVGAGAALALSPLAAGPASA. 2 cysteine pairs are disulfide-bonded: Cys-41–Cys-57 and Cys-75–Cys-103.

Functionally, inhibits mammalian alpha-amylases specifically but has no action on plant and microbial alpha-amylases. Forms a tight stoichiometric 1:1 complex with alpha-amylase. This Streptomyces tendae protein is Alpha-amylase inhibitor HOE-467A.